A 345-amino-acid polypeptide reads, in one-letter code: Ananain (345 aa).

The first 24 residues, 1–24 (MTSKVQLVFLFLFLCVMWASPSAA), serve as a signal peptide directing secretion. A propeptide spans 25–122 (SCDEPSDPMM…VSFDDVDISS (98 aa)) (activation peptide). Cystine bridges form between Cys144/Cys184, Cys178/Cys217, and Cys273/Cys325. Cys147 is an active-site residue. Cys147 is an E64 binding site. Residues His279 and Asn300 contribute to the active site.

In terms of tissue distribution, stem (at protein level).

It catalyses the reaction Hydrolysis of proteins with broad specificity for peptide bonds. Best reported small molecule substrate Bz-Phe-Val-Arg-|-NHMec, but broader specificity than fruit bromelain.. With respect to regulation, strongly inhibited by chicken egg-white cystatin. Inhibited by iodoacetamide and the active-site-directed inhibitor E64 (L-trans-epoxysuccinyl-leucylamide-(4-guanido)-butane). Functionally, cysteine protease. Displays a high level of diversity in substrate specificity at the P1-P1' cleavage site. A hydrophilic P1 residue is preferred, with Gln or Arg strongly preferred. Favors an Ile/Leu residue at the P2 position of substrates, with an overall higher preference for Leu. The optimal tripeptide for cleavage is Pro-Leu-Gln, with cleavage occurring after the Gln residue. Another optimal tripeptide is Val-Leu-Arg, which may imply that a hydrophobic residue at the P3 position of substrates is preferred. This is Ananain from Ananas comosus (Pineapple).